A 369-amino-acid chain; its full sequence is sn-glycerol-3-phosphate import ATP-binding protein UgpC 1 (369 aa).

Residues 4 to 234 (ISIRGVKKNY…PVSRFVAGFV (231 aa)) form the ABC transporter domain. 36–43 (GPSGCGKS) lines the ATP pocket.

This sequence belongs to the ABC transporter superfamily. sn-glycerol-3-phosphate importer (TC 3.A.1.1.3) family. In terms of assembly, the complex is composed of two ATP-binding proteins (UgpC), two transmembrane proteins (UgpA and UgpE) and a solute-binding protein (UgpB).

It is found in the cell inner membrane. The enzyme catalyses sn-glycerol 3-phosphate(out) + ATP + H2O = sn-glycerol 3-phosphate(in) + ADP + phosphate + H(+). In terms of biological role, part of the ABC transporter complex UgpBAEC involved in sn-glycerol-3-phosphate (G3P) import. Responsible for energy coupling to the transport system. The chain is sn-glycerol-3-phosphate import ATP-binding protein UgpC 1 from Rhizobium johnstonii (strain DSM 114642 / LMG 32736 / 3841) (Rhizobium leguminosarum bv. viciae).